Reading from the N-terminus, the 249-residue chain is Isoprenyl transferase (249 aa).

The active site involves D25. D25 contributes to the Mg(2+) binding site. Substrate contacts are provided by residues 26–29, W30, R38, H42, and 70–72; these read GNGR and STE. The Proton acceptor role is filled by N73. Substrate-binding positions include W74, R76, R197, and 203 to 205; that span reads RLS. E216 provides a ligand contact to Mg(2+).

Belongs to the UPP synthase family. Homodimer. Mg(2+) is required as a cofactor.

In terms of biological role, catalyzes the condensation of isopentenyl diphosphate (IPP) with allylic pyrophosphates generating different type of terpenoids. In Streptococcus pyogenes serotype M3 (strain ATCC BAA-595 / MGAS315), this protein is Isoprenyl transferase.